Reading from the N-terminus, the 715-residue chain is ATP-dependent zinc metalloprotease YME1L1 (715 aa).

The interval 31–54 (VSVNTSASPKQHRDTVAEHEAPSS) is disordered. Positions 41-52 (QHRDTVAEHEAP) are enriched in basic and acidic residues. The helical transmembrane segment at 238 to 258 (ILFVLLLFGIYGLLKNPFLSV) threads the bilayer. Residues Val283, Thr325, Gly326, Lys327, Thr328, and Leu329 each contribute to the ATP site. His541 lines the Zn(2+) pocket. Glu542 is an active-site residue. Positions 545 and 619 each coordinate Zn(2+).

The protein in the N-terminal section; belongs to the AAA ATPase family. It in the C-terminal section; belongs to the peptidase M41 family. As to quaternary structure, homohexamer; may also form heterohexamers. Exists in several complexes of 600-1100 kDa. Interacts with AFG1L. The cofactor is Zn(2+). Proteolytically processed by mitochondrial processing peptidase (MPP) to generate the mature form. Degraded in an OMA1-dependent manner in response to oxidative stress.

It localises to the mitochondrion inner membrane. It is found in the mitochondrion. The catalysed reaction is ATP + H2O = ADP + phosphate + H(+). Functionally, ATP-dependent metalloprotease that catalyzes the degradation of folded and unfolded proteins with a suitable degron sequence in the mitochondrial intermembrane region. Plays an important role in regulating mitochondrial morphology and function by cleaving OPA1 at position S2, giving rise to a form of OPA1 that promotes maintenance of normal mitochondrial structure and mitochondrial protein metabolism. Ensures cell proliferation, maintains normal cristae morphology and complex I respiration activity, promotes antiapoptotic activity and protects mitochondria from the accumulation of oxidatively damaged membrane proteins. Required to control the accumulation of nonassembled respiratory chain subunits (NDUFB6, OX4 and ND1). Involved in the mitochondrial adaptation in response to various signals, such as stress or developmental cues, by mediating degradation of mitochondrial proteins to rewire the mitochondrial proteome. Catalyzes degradation of mitochondrial proteins, such as translocases, lipid transfer proteins and metabolic enzymes in response to nutrient starvation in order to limit mitochondrial biogenesis: mechanistically, YME1L is activated by decreased phosphatidylethanolamine levels caused by LPIN1 activity in response to mTORC1 inhibition. Acts as a regulator of adult neural stem cell self-renewal by promoting mitochondrial proteome rewiring, preserving neural stem and progenitor cells self-renewal. Required for normal, constitutive degradation of PRELID1. Catalyzes the degradation of OMA1 in response to membrane depolarization. Mediates degradation of TIMM17A downstream of the integrated stress response (ISR). Catalyzes degradation of MICU1 when MICU1 is not assembled via an interchain disulfide. The sequence is that of ATP-dependent zinc metalloprotease YME1L1 (Yme1l1) from Rattus norvegicus (Rat).